We begin with the raw amino-acid sequence, 256 residues long: Transmembrane protein 74B (256 aa).

The interval M1–A111 is disordered. Low complexity predominate over residues R80–R96. Residues S97 to E108 show a composition bias toward basic and acidic residues. Helical transmembrane passes span F123–I143 and I177–V197.

The protein belongs to the TMEM74 family.

Its subcellular location is the membrane. The chain is Transmembrane protein 74B (TMEM74B) from Homo sapiens (Human).